Consider the following 348-residue polypeptide: uncharacterized protein (348 aa).

It localises to the virion. This is an uncharacterized protein from Acanthamoeba polyphaga mimivirus (APMV).